The following is a 212-amino-acid chain: MKKIKVCLVDDNRELIGLLEDYISEQEDMEVIGVAYNGQECLSILKDKNPDVLVLDIIMPHLDGLAVLGQLKEMKKENYPNVIMLTAFGQEDVTKKAVDLGAAYFILKPFDMENLVNHIRQVSGQTSSFMQRSSSSMRSHRDSKPANLDASITSIIHEIGVPAHIKGYLYLREAISMVYKDIELLGSITKVLYPDIAKKYNTTASRVERAIR.

Positions 5–123 constitute a Response regulatory domain; that stretch reads KVCLVDDNRE…NLVNHIRQVS (119 aa). Positions 10, 11, and 56 each coordinate Ca(2+). Asp56 carries the post-translational modification 4-aspartylphosphate. The H-T-H motif DNA-binding region spans 194–212; the sequence is PDIAKKYNTTASRVERAIR.

Ca(2+) is required as a cofactor. Post-translationally, phosphorylated by KinA and KinB.

It is found in the cytoplasm. In terms of biological role, may play the central regulatory role in sporulation. It may be an element of the effector pathway responsible for the activation of sporulation genes in response to nutritional stress. Spo0A may act in concert with Spo0H (a sigma factor) to control the expression of some genes that are critical to the sporulation process. Repressor of abrB, activator of the spoIIa operon. Binds the DNA sequence 5'-TGNCGAA-3' (0A box). This is Stage 0 sporulation protein A (spo0A) from Priestia megaterium (Bacillus megaterium).